The chain runs to 65 residues: GRDAYIAQPENCVYECAQNSYCNDLCTKNGATSGYCQWLGKYGNACWCKDLPDNVPIRIPGKCHF.

One can recognise an LCN-type CS-alpha/beta domain in the interval 2-64 (RDAYIAQPEN…VPIRIPGKCH (63 aa)). 4 cysteine pairs are disulfide-bonded: cysteine 12-cysteine 63, cysteine 16-cysteine 36, cysteine 22-cysteine 46, and cysteine 26-cysteine 48. A Phenylalanine amide modification is found at phenylalanine 65.

It belongs to the long (4 C-C) scorpion toxin superfamily. Sodium channel inhibitor family. Alpha subfamily. As to expression, expressed by the venom gland.

Its subcellular location is the secreted. Its function is as follows. Alpha toxins bind voltage-independently at site-3 of sodium channels (Nav) and inhibit the inactivation of the activated channels, thereby blocking neuronal transmission. The polypeptide is Alpha-toxin Bot1 (Buthus occitanus tunetanus (Common European scorpion)).